Reading from the N-terminus, the 333-residue chain is Ketol-acid reductoisomerase (NADP(+)) (333 aa).

A KARI N-terminal Rossmann domain is found at Met-1–Thr-179. NADP(+) is bound by residues Tyr-22–Gln-25, Lys-45, Ser-48, Ser-50, and Asp-80–Gln-83. His-105 is an active-site residue. Gly-131 provides a ligand contact to NADP(+). Residues Thr-180–Val-325 form the KARI C-terminal knotted domain. Residues Asp-188, Glu-192, Glu-224, and Glu-228 each contribute to the Mg(2+) site. Ser-249 is a substrate binding site.

Belongs to the ketol-acid reductoisomerase family. The cofactor is Mg(2+).

The catalysed reaction is (2R)-2,3-dihydroxy-3-methylbutanoate + NADP(+) = (2S)-2-acetolactate + NADPH + H(+). It carries out the reaction (2R,3R)-2,3-dihydroxy-3-methylpentanoate + NADP(+) = (S)-2-ethyl-2-hydroxy-3-oxobutanoate + NADPH + H(+). It functions in the pathway amino-acid biosynthesis; L-isoleucine biosynthesis; L-isoleucine from 2-oxobutanoate: step 2/4. Its pathway is amino-acid biosynthesis; L-valine biosynthesis; L-valine from pyruvate: step 2/4. In terms of biological role, involved in the biosynthesis of branched-chain amino acids (BCAA). Catalyzes an alkyl-migration followed by a ketol-acid reduction of (S)-2-acetolactate (S2AL) to yield (R)-2,3-dihydroxy-isovalerate. In the isomerase reaction, S2AL is rearranged via a Mg-dependent methyl migration to produce 3-hydroxy-3-methyl-2-ketobutyrate (HMKB). In the reductase reaction, this 2-ketoacid undergoes a metal-dependent reduction by NADPH to yield (R)-2,3-dihydroxy-isovalerate. This is Ketol-acid reductoisomerase (NADP(+)) from Mycobacterium bovis (strain ATCC BAA-935 / AF2122/97).